The following is a 280-amino-acid chain: Phosphonoacetaldehyde hydrolase (280 aa).

Residue aspartate 20 is the Nucleophile of the active site. Residues aspartate 20 and alanine 22 each coordinate Mg(2+). The active-site Schiff-base intermediate with substrate is the lysine 61. Residue aspartate 194 participates in Mg(2+) binding.

Belongs to the HAD-like hydrolase superfamily. PhnX family. As to quaternary structure, homodimer. Mg(2+) is required as a cofactor.

It catalyses the reaction phosphonoacetaldehyde + H2O = acetaldehyde + phosphate + H(+). Functionally, involved in phosphonate degradation. The protein is Phosphonoacetaldehyde hydrolase of Nitratidesulfovibrio vulgaris (strain DSM 19637 / Miyazaki F) (Desulfovibrio vulgaris).